The primary structure comprises 94 residues: ATP synthase F(0) complex subunit f, mitochondrial (94 aa).

N-acetylalanine is present on Ala2. Ser3 is subject to Phosphoserine. Position 22 is an N6-acetyllysine (Lys22). A helical transmembrane segment spans residues 68–85 (MVLACYVLFSYSFSYKHL).

Belongs to the ATPase F chain family. Component of the ATP synthase complex composed at least of ATP5F1A/subunit alpha, ATP5F1B/subunit beta, ATP5MC1/subunit c (homooctomer), MT-ATP6/subunit a, MT-ATP8/subunit 8, ATP5ME/subunit e, ATP5MF/subunit f, ATP5MG/subunit g, ATP5MK/subunit k, ATP5MJ/subunit j, ATP5F1C/subunit gamma, ATP5F1D/subunit delta, ATP5F1E/subunit epsilon, ATP5PF/subunit F6, ATP5PB/subunit b, ATP5PD/subunit d, ATP5PO/subunit OSCP. ATP synthase complex consists of a soluble F(1) head domain (subunits alpha(3) and beta(3)) - the catalytic core - and a membrane F(0) domain - the membrane proton channel (subunits c, a, 8, e, f, g, k and j). These two domains are linked by a central stalk (subunits gamma, delta, and epsilon) rotating inside the F1 region and a stationary peripheral stalk (subunits F6, b, d, and OSCP).

Its subcellular location is the mitochondrion. It localises to the mitochondrion inner membrane. In terms of biological role, subunit f, of the mitochondrial membrane ATP synthase complex (F(1)F(0) ATP synthase or Complex V) that produces ATP from ADP in the presence of a proton gradient across the membrane which is generated by electron transport complexes of the respiratory chain. ATP synthase complex consist of a soluble F(1) head domain - the catalytic core - and a membrane F(1) domain - the membrane proton channel. These two domains are linked by a central stalk rotating inside the F(1) region and a stationary peripheral stalk. During catalysis, ATP synthesis in the catalytic domain of F(1) is coupled via a rotary mechanism of the central stalk subunits to proton translocation. In vivo, can only synthesize ATP although its ATP hydrolase activity can be activated artificially in vitro. Part of the complex F(0) domain. The chain is ATP synthase F(0) complex subunit f, mitochondrial from Pongo abelii (Sumatran orangutan).